Here is an 86-residue protein sequence, read N- to C-terminus: Antitoxin VapB33 (86 aa).

In terms of biological role, antitoxin component of a type II toxin-antitoxin (TA) system. Upon expression in M.smegmatis neutralizes the effect of cognate toxin VapC33. In Mycobacterium tuberculosis (strain ATCC 25618 / H37Rv), this protein is Antitoxin VapB33 (vapB33).